Reading from the N-terminus, the 367-residue chain is Queuine tRNA-ribosyltransferase (367 aa).

Catalysis depends on D89, which acts as the Proton acceptor. Residues 89 to 93, D143, Q187, and G214 contribute to the substrate site; that span reads DSGGF. The tract at residues 245–251 is RNA binding; the sequence is GVGTPAD. D264 serves as the catalytic Nucleophile. The interval 269-273 is RNA binding; important for wobble base 34 recognition; it reads TRNAR. Zn(2+)-binding residues include C302, C304, C307, and H333.

This sequence belongs to the queuine tRNA-ribosyltransferase family. Homodimer. Within each dimer, one monomer is responsible for RNA recognition and catalysis, while the other monomer binds to the replacement base PreQ1. It depends on Zn(2+) as a cofactor.

The enzyme catalyses 7-aminomethyl-7-carbaguanine + guanosine(34) in tRNA = 7-aminomethyl-7-carbaguanosine(34) in tRNA + guanine. Its pathway is tRNA modification; tRNA-queuosine biosynthesis. Functionally, catalyzes the base-exchange of a guanine (G) residue with the queuine precursor 7-aminomethyl-7-deazaguanine (PreQ1) at position 34 (anticodon wobble position) in tRNAs with GU(N) anticodons (tRNA-Asp, -Asn, -His and -Tyr). Catalysis occurs through a double-displacement mechanism. The nucleophile active site attacks the C1' of nucleotide 34 to detach the guanine base from the RNA, forming a covalent enzyme-RNA intermediate. The proton acceptor active site deprotonates the incoming PreQ1, allowing a nucleophilic attack on the C1' of the ribose to form the product. After dissociation, two additional enzymatic reactions on the tRNA convert PreQ1 to queuine (Q), resulting in the hypermodified nucleoside queuosine (7-(((4,5-cis-dihydroxy-2-cyclopenten-1-yl)amino)methyl)-7-deazaguanosine). This Nitrosospira multiformis (strain ATCC 25196 / NCIMB 11849 / C 71) protein is Queuine tRNA-ribosyltransferase.